We begin with the raw amino-acid sequence, 299 residues long: Putative activator of 90 kDa heat shock protein ATPase homolog 2 (299 aa).

This sequence belongs to the AHA1 family.

Functionally, co-chaperone that stimulates HSP90 ATPase activity. This is Putative activator of 90 kDa heat shock protein ATPase homolog 2 from Homo sapiens (Human).